A 391-amino-acid polypeptide reads, in one-letter code: Phosphoprotein (391 aa).

Residues Thr-10, Thr-16, and Thr-39 each carry the phosphothreonine modification. Over residues 55-65 (KNIQYPTTSHQ) the composition is skewed to polar residues. The tract at residues 55–90 (KNIQYPTTSHQGSKSKGRGSGARPIIVSSSEGGTGG) is disordered. Ser-69 is subject to Phosphoserine. Thr-91, Thr-150, and Thr-165 each carry phosphothreonine. The segment at 145–208 (TSTPVTEFKR…PQQDSTPANV (64 aa)) is disordered. At Ser-188 the chain carries Phosphoserine. A multimerization region spans residues 216 to 279 (ISANEIMDLL…MATVKIMDPG (64 aa)). The stretch at 218–245 (ANEIMDLLRGMDARLQHLEQKVDKVLAQ) forms a coiled coil. Thr-250 carries the phosphothreonine modification. Ser-257 bears the Phosphoserine mark. Phosphothreonine occurs at positions 258 and 282. Residues Ser-292 and Ser-294 each carry the phosphoserine modification. Position 298 is a phosphothreonine (Thr-298). Phosphoserine is present on residues Ser-301 and Ser-374. The tract at residues 343–391 (AGRKVMITKMITDCVANPQMKQVFEQRLAKASTEDALNDIKRDIIRSAI) is interaction with the nucleoprotein. Position 375 is a phosphothreonine (Thr-375).

Belongs to the rubulavirus/avulavirus P protein family. Homotetramer. Interacts (via multimerization domain) with polymerase L; this interaction forms the polymerase L-P complex. Interacts (via N-terminus) with N0 (via Ncore); this interaction allows P to chaperon N0 to avoid N polymerization before encapsidation. Interacts (via C-terminus) with N-RNA template; this interaction positions the polymerase on the template for both transcription and replication. Interacts with host RPS6KB1 kinase; this interaction may play a role in the viral replication and transcription.

Functionally, essential cofactor of the RNA polymerase L that plays a central role in the transcription and replication by forming the polymerase complex with RNA polymerase L and recruiting L to the genomic N-RNA template for RNA synthesis. Also plays a central role in the encapsidation of nascent RNA chains by forming the encapsidation complex with the nucleocapsid protein N (N-P complex). Acts as a chaperone for newly synthesized free N protein, so-called N0, allowing encapsidation of nascent RNA chains during replication. The nucleoprotein protein N prevents excessive phosphorylation of P, which leads to down-regulation of viral transcription/ replication. Participates, together with N, in the formation of viral factories (viroplasms), which are large inclusions in the host cytoplasm where replication takes place. The sequence is that of Phosphoprotein from Mumps virus genotype B (strain Miyahara vaccine) (MuV).